Consider the following 4885-residue polypeptide: MSSSASSRSVESSPARSSAASSSSSSEQHVAGGRLSSSQVNSTSVSSQSSSSRRARDDWCQSSHSSSSGSASSDSSSFCRGSRDSSSASVSRGTWRVDRDSFSVSGTSRSRLLSFPGSSHQPNRTENASHPDDLSSFRDSCVRRDTDTAERVATVRVNFPSRQNNDSSSGTCTSPISSSCDYSATESHSSASPSLRPSSGVVSSSRSSSRPGAALPLSVSSSSLLSQKKGRRKEAESLVDSSSTHSKQRDSAACRLLRVSPSASETTSVCRMSSGSGTARVARLEHQVEASFNPEEYPECFVCHPSLVAPSRLRETGKAQRDQRGLYTRFGRLHLSPQRLSVEATCVYGHCSSPPLSHLGAGAENSEGTNDLALSNEDKKGETQNARKRSASAFSESVSFREDTRRGSLLSVSLPAASSVLGSDLLSPSLREVYRHRGDSYLSRFKGGSSLLPAPRRSSCCVSSVPPFPESEKRNAGSDRRPTRSASLSSLLPNQPPASSSRRPSCSFSLLPAPLFSFGRRDPGGFDTDDACLRHDKESGVCTPAGTDLFVDVSREIRIIDALSEIQKESLIAAHCLDHSAALSEASAPLDASPSSSTVPHVSPSSVSSSLGRLHSSEKQTDCLRLRGSRGLQRRQRHTCSVAPSSADPLAPSFLQPHPSSKQLNQLLDHWRSGRVSVPRGSRVETRGEASCHAFDASPSCPPCSSQSLGSAAPNNACSRAAYGARLEAQANVLSNLDSRQGGRKEEEAADGGEDGEEGSRRLSQQTRPEGVEDRRGWTAIEEFNDCDGNVPRRSQLADFLRTCHVSRSQVGSVLGTHAKESSQDGEGEDQTGEDKGDAGDRCVTHEDDGGILCRSLESRKSEAKGYAMRKGSQKERVEKERMEGSPAKRRGPFPGGGETWTLPAYEADGLSSPRGREVVASCSSAGRLETSSKDASLSCSAFAGSENERLRAWALQAPSAEAFDRVDLVVRRLGLPQKTLQEKQTRPGDPGRSLLDEKPTVSEEKTKDRGGVAVPALASAAVKPFGNNEGGDGSAWSRLTNDLEAFRWKQMMQPSSTFLSAPVAKRGRALSPQGGADSEGRGESEEGRRGGCAAARRRAGAEEETRELLEAYEAARVKILAKSDEEAMQAAVSNSLHQSERVLGKLENVTRRLLEATCQSPKTKPISCSSSSAPSSSSSSSFSSSSSSSDCFSGDGASEATTVAPNGSAALSPPDGEKQRPSVGQRDALQAKLWESERELNSKDAEIGRTLQAVADSQAELARCRQELQESRSKALEAAKKAAVAQRMVRLLHQRRQEDRERWRQAVEECYRSRRSDQEADEDKQETDSASKKTDGNRNTESSLSRTSSCSSCSSSCSSFSSGSSSCSSSCSSCSSSCSSSCSSCSSSCSSSCSSSSSCSASCCGSTLLASASRPSSLSSAWFPAEDELPEVEELVAEYEAETRGYESRIAELQTLLEARNSAVEQLEVKGEALRNEVAFLQSMTEELRRARDAEEDCVLGALRQQVEEAEQSTLRLGREKDQLRSELDRVRASFTKQLAALETLNCRLRKEKEIFAEREKSQRRLHQEEHERMTRELHALRSEKEAGEAELLVLATAKAAAEMKCQQLEQQQETLKIHQERLCGNLLHLKNKAHGLSLSRRNHVSRQDSTNQAPSAECVDASSRRRVTSSVSEDDPSSALWSSSAERTDTSGNLFSSLSGPRSRSSGSPGESFERSHSSSCLASSPSCPSAASGSKEETSGSLQRMRSSASGSSKSVSVSSVNVLTYSEGPPLQSRSEFASSRPSFPSPSSASLSSESHRACGAPQAKEAANFFERLSSRLQSMREESERRQHALPGLPPHARSLEATQRQGRDSELGSFGEGPQGRAHSRQSGGDSAPSSFPAVPSQSGSSSASRGTEAFLGLAGDLERKDENASRFLSDSLGAQGQAQTDRGPMGFTARDEAGHLQGLPSGENDESITSSAFFARARQMKNSGKAVHSPDPRKDSGSESSDSQDPSAEEEEGDERAEEEEGDERAEDEEEDEREEEEEEEDEREEEEEEEDEREEEEEEGDERAEDEEEDEREEEEEEDERVEEEEEEDEREEEESVRGEGESGSGSISSSRRSRRSTPERGTRISSFSPRNGAGRKTSRSSFSGESRTSSEGSRRSGTSRSRDYASSPTSSRRDGETSPPGKSGHRRKRSNSASSEDSSRSAPQSDVSVNQVYAHPAALGSKTSGVRTPQASASRGAPASTAGATGGRPVSGSHPSRATERRDDGRQAKSVKKKEPQTRVRSRPRPESQESKTPESADSGATLDRGARHRETPRRNSESEEARPGEGERTCVSPASGGEKRRNFVSRDETSMGASRADHQETMKNAKLSTISRKRTPSPVAIYRVSPSSSSNASASQRESRAAKSSNTGMSSSSSFSLYRPHDFSREGSQGGPPPDFKFSEASSSSSSSISSSHSSSVPFPFSALASGSSSSAPAKTEKKVECEGAASSLSSLGASSSCHERVDPELRQQRGNTAEAQQKSDPSTVSPRKHSDEQRTEREGKTRRPEDSGCATQHRNPETRGRPPQPSLVAIQEGHPTSPFSVLPQHPPAARQLQPLSPSLRLSPSSVRCKQCAGVSSRFPHAHDLRVEPCCHRRCEGRNCSSGEESGEREQAVRCRHNPIPGRGPPVTENTVCHAPSDQGRTLAGGPRLAGSRHKEPENLSSASSCPSSSCPRAARQREGEGEKRHRETPSVKREENRKSSRTGEASSSVSIPNERSSDDVSPSGLERLSFGCTYTRYGREGREEKSPLLAPGHAANQRLTDGRSLHSFPDERKPSDMERRVASHMLPEKRTEEASPAAASGPGQRRLCGEACRPETGDKCGERQPVSSFSREKGTSSVQARRDESDEPRFVEKLRIGEQNPSLVLREMEDLRVTSRTAAEIDACMRHARLACRRAEPVSACPPSPFSFRGSVGDQLSPCESPHGPSHGASVSCVSAPTAIPPACCWLPEETAARGHRGNCVHANWQALADEELLEEEDGDTRRGEGEEREAREFGDRGERDDGHRAARGEVGCGVLGGRRERREETGRRRDTTRIPESCGGGEESFSPSSPYIQEERRQREAAQAVEAVARDADRNAYSHEHVQSLKEKLLRTIQTNEILRKRSRELSKKNRELRQHLLGDPAALPLPSFPSSSLLSSLSLAHSDRCRDMPQRLPSPPREDLKSSDSGVSSGALAGESDRRYSCPRETSSPSCGGRGGRRHPVFCRELSRNGNSRLDAQSGPQCRDFSPQLWRGERGNAGEMRPRESRESFGSCREVDDDSPQRWTRDGDREERRRARLPPSSSSPRHAGQAVDQRRLNYPQSFGASELRLCSSTPSFDEGGFPCSSTPSFDDEAILPCGREELQDSVGDNRGHLWGKRGRGREDPSWEATARTSGASPAYEEGWFRQEAFEEREEERRRQQFSPGCSPRSPTFLPCGGGTLRDAVEAPQPSKAACDGGYAGTVWSLPCVPDKAEVDNERREWKQATCEREPAEGDKTKCDKDAEGSERNCEGEREEKRRVKGLSEEVASVEGDFWAPASIIPSPLPSPAFAATGEKRLGDTVAPGVSSQAAFSLSCLSSARCASNPLPLTLDEAAGKVAAVESRSPPSVSPPPSTVSLLSSPEKARQGSDEGEETREAEQKREPREAIFPSPSLFSPAASFSSDASSSPCLAALRAVSPPGSRAKRLGEGAPEQVFLKEGETVNAGRHVLPQSLDAETGGFSNSAPVRERPRSLDLGKRNLHLAHEEDALAIHDQTSRTGSENEDSRDAAEDEAGVYAMPKAFEACGRAADGNGSSQTSCASLPKARDGESQEARPSLIVSTCEESPFCLCRKPPASLFEDPGSQKEAEKPLGKGEDGGVERGGEADRGAELELEEESSRVRQEAGEKANRDCNAKLRREQRGEGEIREETHEEKRTKAEAAEEETGGERREEETLKGDQEFRCERRDQSTGEQAAEERKTTGTKARCLADVLSRNINPLFPAEAVPGEEEDQDAGIFAEETNAAGCAKSERNEVDDAQFGSPRETGDSQTVCFSPHSALRCLSIKRLSLPLPSRSCKTFAEKLLSPSHVRSSLSSALAGSDSSSPGALGVSENVNAESRSPSYASTCWSSFLEDGERTEEARGCSRPSQPGVCTPSFQPSSLPPSFFTELPTTHMIQTARTNFPSTPLSFRSSSSSSPILGDLSRKSSSSRCSCGSSSPSPARGTAPRRPPVSSLRLSLPRAVASAQPSFCCNSSRSSSSLSSFSLSSSRPFLSARPPWGSTLGLKSKTRVGRQPRGYPAYLFHLHEAGKTICRRCDACPFRLLQREQEELRRLQALLLARKNRERSETREDVKPVQRESPSFLLKHSEERKDVLPGRTENDGQGPSLTSTRLRLGLLCQPMATALRQNEFRRENMDLCPRSPSPRGASSSVSPASSASPASSASPASSASRTSRTSRASRTSSPRSSVSHVSSARQGEAVRDVTESSDLRRLRPFESLRTLEKLRPLETRSVSSRALPLTPRVQTKSLTSRSASMAPVSSRAVSTSRGPRASLNSLSSMWTSQLVSAHHMKSRRLPDVDSCLARFPWFSAEDARLLACLLQQRRRELWEEIFNYERDLALAAAAPSQKRAAAPEDRREDGDTHRPGSLTETTEREGKEQERKAETDREEQERKTETDREEQERKTETDREEQKRKTETDREEHERKTETDREEQGRKAETDREEQERKTETDREEQERKAETERLQDWRETRKSEKTAKGSEQKSSRQRKLKTDAKDPRAGREEDTEKGKEGRKENARCRLVMRESGNLYGGSSCADLLLSPPGEDGGSSGCDRNGGESHESREEKKSRPPWRRPPSLVPRLCKGAWCGASKAAAALRHAEMNTR.

Residues 1437–1528 are a coiled coil; that stretch reads VAEYEAETRG…GREKDQLRSE (92 aa).

It localises to the cytoplasm. It is found in the cytoskeleton. The protein localises to the microtubule organizing center. The protein resides in the centrosome. In terms of biological role, required for proper nuclei segregation during the cell division. Plays a role in coordination of karyokinesis and cytokinesis during the tachyzoite cell cycle. This chain is Centrosome-associated protein CEP530, found in Toxoplasma gondii (strain ATCC 50611 / Me49).